Reading from the N-terminus, the 57-residue chain is Large ribosomal subunit protein bL32 (57 aa).

This sequence belongs to the bacterial ribosomal protein bL32 family.

This chain is Large ribosomal subunit protein bL32, found in Streptomyces avermitilis (strain ATCC 31267 / DSM 46492 / JCM 5070 / NBRC 14893 / NCIMB 12804 / NRRL 8165 / MA-4680).